A 167-amino-acid chain; its full sequence is Probable chemoreceptor glutamine deamidase CheD (167 aa).

The protein belongs to the CheD family.

It carries out the reaction L-glutaminyl-[protein] + H2O = L-glutamyl-[protein] + NH4(+). Its function is as follows. Probably deamidates glutamine residues to glutamate on methyl-accepting chemotaxis receptors (MCPs), playing an important role in chemotaxis. This chain is Probable chemoreceptor glutamine deamidase CheD, found in Natronomonas pharaonis (strain ATCC 35678 / DSM 2160 / CIP 103997 / JCM 8858 / NBRC 14720 / NCIMB 2260 / Gabara) (Halobacterium pharaonis).